The primary structure comprises 380 residues: Glucose-1-phosphate adenylyltransferase (380 aa).

Alpha-D-glucose 1-phosphate contacts are provided by residues Gly-164, 179–180 (EK), and Ser-190.

Belongs to the bacterial/plant glucose-1-phosphate adenylyltransferase family. As to quaternary structure, homotetramer.

The catalysed reaction is alpha-D-glucose 1-phosphate + ATP + H(+) = ADP-alpha-D-glucose + diphosphate. It participates in glycan biosynthesis; glycogen biosynthesis. Its function is as follows. Involved in the biosynthesis of ADP-glucose, a building block required for the elongation reactions to produce glycogen. Catalyzes the reaction between ATP and alpha-D-glucose 1-phosphate (G1P) to produce pyrophosphate and ADP-Glc. This Lactococcus lactis subsp. cremoris (strain MG1363) protein is Glucose-1-phosphate adenylyltransferase.